The following is a 517-amino-acid chain: Ribonuclease Y (517 aa).

Residues 1–21 (MIEVLIGLGAGVAGVGAGYLY) form a helical membrane-spanning segment. A KH domain is found at 207 to 273 (LINVVNIKND…TRVIELLVED (67 aa)). Residues 333–426 (ALAHSLEVAH…VCAADCLSAA (94 aa)) form the HD domain.

Belongs to the RNase Y family.

The protein resides in the cell membrane. Functionally, endoribonuclease that initiates mRNA decay. This chain is Ribonuclease Y, found in Campylobacter curvus (strain 525.92).